A 382-amino-acid polypeptide reads, in one-letter code: Fetuin-B (382 aa).

Residues 1 to 15 (MGLLLPLALCILVLC) form the signal peptide. Cystatin fetuin-B-type domains lie at 25-138 (ALNP…YNCT) and 149-255 (MTCP…VTCD). A glycan (N-linked (GlcNAc...) asparagine) is linked at asparagine 37. Disulfide bonds link cysteine 93–cysteine 104, cysteine 117–cysteine 137, and cysteine 151–cysteine 154. The N-linked (GlcNAc...) asparagine glycan is linked to asparagine 136. The N-linked (GlcNAc...) asparagine glycan is linked to asparagine 182. Disulfide bonds link cysteine 216-cysteine 224 and cysteine 237-cysteine 254. 2 stretches are compositionally biased toward polar residues: residues 262–276 (PATG…QKPT) and 286–295 (QKNTPPTDSP). Disordered regions lie at residues 262–320 (PATG…EKGP) and 363–382 (ARTA…VLPP). O-linked (GalNAc...) threonine glycans are attached at residues threonine 289 and threonine 292. Residues 310-320 (LDDKNSQEKGP) show a composition bias toward basic and acidic residues. Residue serine 315 is modified to Phosphoserine.

The protein belongs to the fetuin family. In terms of tissue distribution, liver and testis.

The protein localises to the secreted. Protease inhibitor required for egg fertilization. Required to prevent premature zona pellucida hardening before fertilization, probably by inhibiting the protease activity of ASTL, a protease that mediates the cleavage of ZP2 and triggers zona pellucida hardening. The sequence is that of Fetuin-B (FETUB) from Homo sapiens (Human).